Consider the following 393-residue polypeptide: Acetate kinase (393 aa).

Asn-7 is a Mg(2+) binding site. Lys-14 contributes to the ATP binding site. Residue Arg-89 participates in substrate binding. Asp-146 functions as the Proton donor/acceptor in the catalytic mechanism. Residues 204 to 208 (HIGNG), 279 to 281 (DSR), and 327 to 331 (GIGEN) each bind ATP. Glu-379 is a Mg(2+) binding site.

Belongs to the acetokinase family. As to quaternary structure, homodimer. Mg(2+) is required as a cofactor. It depends on Mn(2+) as a cofactor.

The protein resides in the cytoplasm. It carries out the reaction acetate + ATP = acetyl phosphate + ADP. It functions in the pathway metabolic intermediate biosynthesis; acetyl-CoA biosynthesis; acetyl-CoA from acetate: step 1/2. Its function is as follows. Catalyzes the formation of acetyl phosphate from acetate and ATP. Can also catalyze the reverse reaction. The polypeptide is Acetate kinase (Acholeplasma laidlawii (strain PG-8A)).